Reading from the N-terminus, the 728-residue chain is Ribosome biogenesis protein bop1-A (728 aa).

A disordered region spans residues 1-114 (MKRGSQGEAG…ENDSSDEEDI (114 aa)). The span at 55–67 (SDDEEDHWSEEEE) shows a compositional bias: acidic residues. The span at 68–77 (NPGKSPKEII) shows a compositional bias: basic and acidic residues. 7 WD repeats span residues 393–432 (GHKD…CMKS), 434–474 (VLEG…RLLC), 514–556 (KHQK…SQNP), 559–597 (KNKG…LTKK), 600–639 (TNCK…KPYK), 643–682 (HHKK…DLLQ), and 698–728 (HRDL…RLFT).

It belongs to the WD repeat BOP1/ERB1 family. As to quaternary structure, component of the PeBoW complex, composed of bop1, pes1 and wdr12. The complex is held together by bop1, which interacts with pes1 via its N-terminal domain and with wdr12 via a high-affinity interaction between the seven-bladed beta-propeller domains of the 2 proteins. The PeBoW complex associates with the 66S pre-ribosome.

It is found in the nucleus. The protein resides in the nucleolus. Its subcellular location is the nucleoplasm. Component of the PeBoW complex, which is required for maturation of 28S and 5.8S ribosomal RNAs and formation of the 60S ribosome. This chain is Ribosome biogenesis protein bop1-A (bop1-a), found in Xenopus laevis (African clawed frog).